Consider the following 82-residue polypeptide: Cytochrome b559 subunit alpha (82 aa).

Residues 22 to 36 (IIHAVTLPAIFIAGF) form a helical membrane-spanning segment. Heme is bound at residue H24.

Belongs to the PsbE/PsbF family. In terms of assembly, heterodimer of an alpha subunit and a beta subunit. PSII is composed of 1 copy each of membrane proteins PsbA, PsbB, PsbC, PsbD, PsbE, PsbF, PsbH, PsbI, PsbJ, PsbK, PsbL, PsbM, PsbT, PsbX, PsbY, Psb30/Ycf12, peripheral proteins PsbO, CyanoQ (PsbQ), PsbU, PsbV and a large number of cofactors. It forms dimeric complexes. Heme b is required as a cofactor.

It is found in the cellular thylakoid membrane. Its function is as follows. This b-type cytochrome is tightly associated with the reaction center of photosystem II (PSII). PSII is a light-driven water:plastoquinone oxidoreductase that uses light energy to abstract electrons from H(2)O, generating O(2) and a proton gradient subsequently used for ATP formation. It consists of a core antenna complex that captures photons, and an electron transfer chain that converts photonic excitation into a charge separation. In Prochlorococcus marinus (strain MIT 9515), this protein is Cytochrome b559 subunit alpha.